Here is a 344-residue protein sequence, read N- to C-terminus: Biotin synthase (344 aa).

In terms of domain architecture, Radical SAM core spans 40-267 (AQVQVSTLLS…KSMVRLSAGR (228 aa)). [4Fe-4S] cluster is bound by residues C55, C59, and C62. 4 residues coordinate [2Fe-2S] cluster: C99, C130, C190, and R262.

The protein belongs to the radical SAM superfamily. Biotin synthase family. In terms of assembly, homodimer. It depends on [4Fe-4S] cluster as a cofactor. The cofactor is [2Fe-2S] cluster.

The catalysed reaction is (4R,5S)-dethiobiotin + (sulfur carrier)-SH + 2 reduced [2Fe-2S]-[ferredoxin] + 2 S-adenosyl-L-methionine = (sulfur carrier)-H + biotin + 2 5'-deoxyadenosine + 2 L-methionine + 2 oxidized [2Fe-2S]-[ferredoxin]. It participates in cofactor biosynthesis; biotin biosynthesis; biotin from 7,8-diaminononanoate: step 2/2. Its function is as follows. Catalyzes the conversion of dethiobiotin (DTB) to biotin by the insertion of a sulfur atom into dethiobiotin via a radical-based mechanism. The polypeptide is Biotin synthase (Xanthomonas axonopodis pv. citri (strain 306)).